A 304-amino-acid polypeptide reads, in one-letter code: MSWIDRIFNKDTSSTSSRKANVPEGVWTKCTSCEQVLYRDELRRHLEVCPKCGHHMRIDARERLLALLDKDSSQELSAELEPKDILKFKDLKKYKDRISAAQKETGEKDALISMFGTLYGMPIVAAASNFSFMGGSMGSVVGAKFVQAAEKAIAENCPFVCFSASGGARMQEALFSLMQMAKTSAVLAKMREQGVPFISVLTDPTLGGVSASFAMLGDINIAEPKALIGFAGPRVIEQTVREKLPEGFQRSEFLLEKGAIDMIVKRADMRHTLASVLSKLSNKPSPFVEPELVENEEQSKSDNE.

In terms of domain architecture, CoA carboxyltransferase N-terminal spans Val-26–Asn-295. The Zn(2+) site is built by Cys-30, Cys-33, Cys-49, and Cys-52. The C4-type zinc-finger motif lies at Cys-30–Cys-52. Residues Ser-281–Glu-304 are disordered.

Belongs to the AccD/PCCB family. In terms of assembly, acetyl-CoA carboxylase is a heterohexamer composed of biotin carboxyl carrier protein (AccB), biotin carboxylase (AccC) and two subunits each of ACCase subunit alpha (AccA) and ACCase subunit beta (AccD). Zn(2+) serves as cofactor.

It is found in the cytoplasm. The catalysed reaction is N(6)-carboxybiotinyl-L-lysyl-[protein] + acetyl-CoA = N(6)-biotinyl-L-lysyl-[protein] + malonyl-CoA. It participates in lipid metabolism; malonyl-CoA biosynthesis; malonyl-CoA from acetyl-CoA: step 1/1. Component of the acetyl coenzyme A carboxylase (ACC) complex. Biotin carboxylase (BC) catalyzes the carboxylation of biotin on its carrier protein (BCCP) and then the CO(2) group is transferred by the transcarboxylase to acetyl-CoA to form malonyl-CoA. The sequence is that of Acetyl-coenzyme A carboxylase carboxyl transferase subunit beta from Pasteurella multocida (strain Pm70).